The primary structure comprises 702 residues: Palmitoyltransferase AKR1 (702 aa).

Residues 1–40 (MSTDAELQTISGLSVASKSAPSTQTEGVTASGKVESTTNA) are compositionally biased toward polar residues. A disordered region spans residues 1–51 (MSTDAELQTISGLSVASKSAPSTQTEGVTASGKVESTTNAEEATSDVEEEE). The Cytoplasmic portion of the chain corresponds to 1 to 299 (MSTDAELQTI…TTNLLCFFTP (299 aa)). ANK repeat units follow at residues 49–80 (EEEN…VLDT), 83–112 (DGVT…VVDA), 117–147 (LNGT…PLRS), 150–179 (QGYN…PVDC), 183–212 (NGRT…DVKI), and 216–245 (QGFL…DMYA). 2 helical membrane-spanning segments follow: residues 300-320 (FILI…FGII) and 321-341 (LTVA…LPSL). Over 342 to 354 (YNGHAALLKSPFQ) the chain is Cytoplasmic. A helical transmembrane segment spans residues 355–375 (AGIFTGSAFWVTVKYLTSVLP). Residues 376–379 (ATFA) lie on the Lumenal side of the membrane. The chain crosses the membrane as a helical span at residues 380–400 (SHPILNFFFASIFGLAMYCFF). Residues 401 to 479 (RCMSMDPGYI…WNAIGVRNHR (79 aa)) are Cytoplasmic-facing. Positions 436 to 486 (HFCFVTYVRKPLRSKFCRQSKRVVARFDHFCPWVWNAIGVRNHRMFVLYVL) constitute a DHHC domain. Residue Cys466 is the S-palmitoyl cysteine intermediate of the active site. The helical transmembrane segment at 480–500 (MFVLYVLFLQIGIPLWLALNS) threads the bilayer. At 501 to 518 (AYFGELLEIKRWDPLEFY) the chain is on the lumenal side. A helical transmembrane segment spans residues 519 to 539 (LVIWISLQLIWITFLSFVQIF). The Cytoplasmic segment spans residues 540-702 (QICRSLTTSE…GEALLAESQV (163 aa)). The disordered stretch occupies residues 679–702 (PNQQQTNNRSTREDGEALLAESQV).

This sequence belongs to the DHHC palmitoyltransferase family. AKR/ZDHHC17 subfamily.

It is found in the early endosome membrane. The protein resides in the golgi apparatus membrane. It catalyses the reaction L-cysteinyl-[protein] + hexadecanoyl-CoA = S-hexadecanoyl-L-cysteinyl-[protein] + CoA. Its function is as follows. Palmitoyltransferase specific for casein kinase 1. In Yarrowia lipolytica (strain CLIB 122 / E 150) (Yeast), this protein is Palmitoyltransferase AKR1 (AKR1).